The following is a 37-amino-acid chain: Large ribosomal subunit protein bL36 (37 aa).

It belongs to the bacterial ribosomal protein bL36 family.

This is Large ribosomal subunit protein bL36 from Moorella thermoacetica (strain ATCC 39073 / JCM 9320).